The chain runs to 309 residues: UPF0252 protein PH0672 (309 aa).

Helical transmembrane passes span 5–25 (SVII…NESI) and 106–126 (AVLT…LMIF).

The protein belongs to the UPF0252 family.

It is found in the cell membrane. The protein is UPF0252 protein PH0672 of Pyrococcus horikoshii (strain ATCC 700860 / DSM 12428 / JCM 9974 / NBRC 100139 / OT-3).